The sequence spans 274 residues: Rhamnulose-1-phosphate aldolase (274 aa).

Residue Glu-117 is part of the active site. Zn(2+) is bound by residues His-141, His-143, and His-212.

This sequence belongs to the aldolase class II family. RhaD subfamily. Homotetramer. Zn(2+) serves as cofactor.

It localises to the cytoplasm. It catalyses the reaction L-rhamnulose 1-phosphate = (S)-lactaldehyde + dihydroxyacetone phosphate. It participates in carbohydrate degradation; L-rhamnose degradation; glycerone phosphate from L-rhamnose: step 3/3. In terms of biological role, catalyzes the reversible cleavage of L-rhamnulose-1-phosphate to dihydroxyacetone phosphate (DHAP) and L-lactaldehyde. In Shigella dysenteriae serotype 1 (strain Sd197), this protein is Rhamnulose-1-phosphate aldolase.